We begin with the raw amino-acid sequence, 515 residues long: Dimethylnonatriene synthase (515 aa).

The chain crosses the membrane as a helical span at residues Phe3–Ile23. Substrate is bound at residue His219. Lys252 is covalently cross-linked (Glycyl lysine isopeptide (Lys-Gly) (interchain with G-Cter in ubiquitin)). Residue Cys452 coordinates heme.

This sequence belongs to the cytochrome P450 family. Heme serves as cofactor. As to expression, expressed in stems, flower peduncles, receptacle of developing and mature flowers and in stigma of mature opening flower buds.

The protein localises to the membrane. It carries out the reaction (3S,6E)-nerolidol + reduced [NADPH--hemoprotein reductase] + O2 = (3E)-4,8-dimethylnona-1,3,7-triene + but-3-en-2-one + oxidized [NADPH--hemoprotein reductase] + 2 H2O + H(+). The enzyme catalyses (6E,10E)-geranyllinalool + reduced [NADPH--hemoprotein reductase] + O2 = (3E,7E)-4,8,12-trimethyltrideca 1,3,7,11-tetraene + but-3-en-2-one + oxidized [NADPH--hemoprotein reductase] + 2 H2O + H(+). It functions in the pathway secondary metabolite biosynthesis; terpenoid biosynthesis. Involved in the biosynthesis of homoterpenes, attractants of herbivores parasitoids and predators (e.g. predatory mites and parasitoid wasps). Catalyzes the conversion of the C20 (E,E)-geranyllinalool to C16-homoterpene 4,8,12-trimethyltrideca-1,3,7,11-tetraene (TMTT) of the C15 (E)-nerolidol to C11-homoterpene (E)-4,8-dimethyl-1,3,7-nonatriene (DMNT); these volatile compounds are produced upon insect herbivore attack and emitted from flowers and vegetative tissues during herbivore feeding. Required during resistance responses to the fungus Alternaria brassicae. Prevents oviposition of the phloem-feeding insect cabbage whitefly (Aleyrodes proletella). The protein is Dimethylnonatriene synthase of Arabidopsis thaliana (Mouse-ear cress).